The chain runs to 152 residues: Chemokine-like factor (152 aa).

An MARVEL domain is found at 13-133 (FCCTLKCFVK…DCALMCQKLR (121 aa)). 4 helical membrane-spanning segments follow: residues 19-39 (CFVK…FIVG), 46-66 (IVIT…YTCG), 81-101 (VINS…ALIP), and 108-128 (ILGG…CALM).

The protein belongs to the chemokine-like factor family. As to expression, ubiquitous.

The protein resides in the membrane. In terms of biological role, may play an important role in inflammation and regeneration of skeletal muscle. Essential for embryonic development. In Mus musculus (Mouse), this protein is Chemokine-like factor (Cklf).